A 193-amino-acid polypeptide reads, in one-letter code: MHKLVIATWNKEKRDELSRYFQQMDVSIQSLRGDIPDVKETGATFIENARLKAEAVRQYEPTAIIVAEDSGLCVDALDGFPNVRTARFMEGTDDERAAKVLQRLGDRPMSERTAVFQSAVVILFPDGLMRTAVGKIEGWITYGPVKDGQGYGGIFILCDEQLLAENIQMARCNHRSQAIRQAVYYMEEWLVTV.

This sequence belongs to the HAM1 NTPase family.

The protein is Non-canonical purine NTP pyrophosphatase homolog of Halalkalibacterium halodurans (strain ATCC BAA-125 / DSM 18197 / FERM 7344 / JCM 9153 / C-125) (Bacillus halodurans).